The primary structure comprises 303 residues: HTH-type transcriptional regulator YjiE (303 aa).

Residues Ile-11 to Ser-68 form the HTH lysR-type domain. Positions Phe-28–Arg-47 form a DNA-binding region, H-T-H motif.

This sequence belongs to the LysR transcriptional regulatory family. As to quaternary structure, forms dimers, tetramers and possibly dodecameric complexes; oligomerization may be governed by cellular concentrations. DNA-binding seems to decrease oligomerization.

In terms of biological role, protects cells from HOCl (hypochlorite) stress but not peroxide or diamide stress. Decreases the intracellular load of reactive oxygen species by up-regulating genes involved in methionine and cysteine biosynthesis and down-regulating Fur-regulated genes involved in iron acquisition. Has also been suggested to down-regulate expression of the flagellar regulon, decreasing motility, but this activity was not confirmed in a second study. The chain is HTH-type transcriptional regulator YjiE (yjiE) from Escherichia coli (strain K12).